The following is a 107-amino-acid chain: UPF0145 protein LVIS_1527 (107 aa).

The protein belongs to the UPF0145 family.

The polypeptide is UPF0145 protein LVIS_1527 (Levilactobacillus brevis (strain ATCC 367 / BCRC 12310 / CIP 105137 / JCM 1170 / LMG 11437 / NCIMB 947 / NCTC 947) (Lactobacillus brevis)).